Here is a 309-residue protein sequence, read N- to C-terminus: ATP synthase gamma chain (309 aa).

The protein belongs to the ATPase gamma chain family. As to quaternary structure, F-type ATPases have 2 components, CF(1) - the catalytic core - and CF(0) - the membrane proton channel. CF(1) has five subunits: alpha(3), beta(3), gamma(1), delta(1), epsilon(1). CF(0) has three main subunits: a, b and c.

It localises to the cell membrane. Its function is as follows. Produces ATP from ADP in the presence of a proton gradient across the membrane. The gamma chain is believed to be important in regulating ATPase activity and the flow of protons through the CF(0) complex. This chain is ATP synthase gamma chain, found in Salinispora tropica (strain ATCC BAA-916 / DSM 44818 / JCM 13857 / NBRC 105044 / CNB-440).